The sequence spans 257 residues: Phosphate import ATP-binding protein PstB (257 aa).

An ABC transporter domain is found at 11 to 252 (IQVRDLNFYY…PAKKQTEDYI (242 aa)). Position 43 to 50 (43 to 50 (GPSGCGKS)) interacts with ATP.

It belongs to the ABC transporter superfamily. Phosphate importer (TC 3.A.1.7) family. As to quaternary structure, the complex is composed of two ATP-binding proteins (PstB), two transmembrane proteins (PstC and PstA) and a solute-binding protein (PstS).

Its subcellular location is the cell inner membrane. The enzyme catalyses phosphate(out) + ATP + H2O = ADP + 2 phosphate(in) + H(+). Its function is as follows. Part of the ABC transporter complex PstSACB involved in phosphate import. Responsible for energy coupling to the transport system. This chain is Phosphate import ATP-binding protein PstB, found in Enterobacter cloacae.